Consider the following 533-residue polypeptide: Beta-1,4 N-acetylgalactosaminyltransferase 1 (533 aa).

Topologically, residues 1 to 7 are cytoplasmic; sequence MWLGRRA. A helical; Signal-anchor for type II membrane protein transmembrane segment spans residues 8 to 25; sequence LCALVLLLACASLGLLYA. The Lumenal portion of the chain corresponds to 26 to 533; it reads STRDAPGLRL…KHRLQCMTSQ (508 aa). 3 N-linked (GlcNAc...) asparagine glycosylation sites follow: Asn-79, Asn-179, and Asn-274. A disulfide bridge connects residues Cys-429 and Cys-476.

It belongs to the glycosyltransferase 2 family. In terms of assembly, homodimer; disulfide-linked.

The protein localises to the golgi apparatus membrane. It carries out the reaction a ganglioside GM3 (d18:1(4E)) + UDP-N-acetyl-alpha-D-galactosamine = a ganglioside GM2 (d18:1(4E)) + UDP + H(+). The catalysed reaction is a ganglioside GM3 + UDP-N-acetyl-alpha-D-galactosamine = a ganglioside GM2 + UDP + H(+). The enzyme catalyses a ganglioside GD3 + UDP-N-acetyl-alpha-D-galactosamine = a ganglioside GD2 + UDP + H(+). It catalyses the reaction a ganglioside GD3 (d18:1(4E)) + UDP-N-acetyl-alpha-D-galactosamine = a ganglioside GD2 (d18:1(4E)) + UDP + H(+). It carries out the reaction a beta-D-Gal-(1-&gt;4)-beta-D-Glc-(1&lt;-&gt;1)-Cer(d18:1(4E)) + UDP-N-acetyl-alpha-D-galactosamine = a ganglioside GA2 (d18:1(4E)) + UDP + H(+). The catalysed reaction is a ganglioside GD1a + UDP-N-acetyl-alpha-D-galactosamine = a ganglioside GalNAc-GD1a + UDP + H(+). The enzyme catalyses a ganglioside GT3 (d18:1(4E)) + UDP-N-acetyl-alpha-D-galactosamine = a ganglioside GT2 (d18:1(4E)) + UDP + H(+). It catalyses the reaction a beta-D-galactosyl-(1-&gt;4)-beta-D-glucosyl-(1&lt;-&gt;1)-ceramide + UDP-N-acetyl-alpha-D-galactosamine = a ganglioside GA2 + UDP + H(+). It carries out the reaction a neolactoside IV(3)-alpha-NeuGc-nLc4Cer + UDP-N-acetyl-alpha-D-galactosamine = a neolactoside IV(4)-beta-GalNAc-IV(3)-alpha-NeuGc-nLc4Cer + UDP + H(+). Its pathway is sphingolipid metabolism. Involved in the biosynthesis of gangliosides GM2, GD2, GT2 and GA2 from GM3, GD3, GT3 and GA3, respectively. The sequence is that of Beta-1,4 N-acetylgalactosaminyltransferase 1 from Homo sapiens (Human).